A 245-amino-acid chain; its full sequence is GATA zinc finger domain-containing protein 1 (245 aa).

The GATA-type zinc-finger motif lies at Cys-9–Cys-33. Residues Thr-39 to Ser-70 are compositionally biased toward low complexity. Residues Thr-39 to Lys-110 are disordered. The span at Gln-71–Gln-80 shows a compositional bias: polar residues.

The protein localises to the nucleus. Component of some chromatin complex recruited to chromatin sites methylated 'Lys-4' of histone H3 (H3K4me), with a preference for trimethylated form (H3K4me3). This Xenopus laevis (African clawed frog) protein is GATA zinc finger domain-containing protein 1 (gatad1).